Reading from the N-terminus, the 260-residue chain is Small ribosomal subunit protein eS1 (260 aa).

Basic residues predominate over residues 1 to 18 (MAVGKNKRMSKGKKGGKK). Positions 1 to 20 (MAVGKNKRMSKGKKGGKKKA) are disordered.

It belongs to the eukaryotic ribosomal protein eS1 family. As to quaternary structure, component of the small ribosomal subunit. Mature ribosomes consist of a small (40S) and a large (60S) subunit. The 40S subunit contains about 33 different proteins and 1 molecule of RNA (18S). The 60S subunit contains about 49 different proteins and 3 molecules of RNA (25S, 5.8S and 5S).

Its subcellular location is the cytoplasm. This is Small ribosomal subunit protein eS1 from Ostreococcus lucimarinus (strain CCE9901).